We begin with the raw amino-acid sequence, 206 residues long: Recombination protein RecR (206 aa).

Residues C60–C75 form a C4-type zinc finger. One can recognise a Toprim domain in the interval R83–P178.

The protein belongs to the RecR family.

May play a role in DNA repair. It seems to be involved in an RecBC-independent recombinational process of DNA repair. It may act with RecF and RecO. The sequence is that of Recombination protein RecR from Neisseria gonorrhoeae (strain NCCP11945).